The sequence spans 187 residues: Putative adenylate kinase (187 aa).

G10, G12, K13, T14, and V15 together coordinate ATP. Residues 30 to 53 (SLSQFVIENKLYTEYDELRQSYII) form an NMP region. Residues 103-113 (GRGWADIKVAE) are LID. Residue R104 participates in ATP binding.

This sequence belongs to the adenylate kinase family. AK6 subfamily. As to quaternary structure, interacts with uS11. Not a structural component of 40S pre-ribosomes, but transiently interacts with them by binding to uS11.

The catalysed reaction is AMP + ATP = 2 ADP. It carries out the reaction ATP + H2O = ADP + phosphate + H(+). In terms of biological role, broad-specificity nucleoside monophosphate (NMP) kinase that catalyzes the reversible transfer of the terminal phosphate group between nucleoside triphosphates and monophosphates. Also has ATPase activity. Involved in the late maturation steps of the 30S ribosomal particles, specifically 16S rRNA maturation. While NMP activity is not required for ribosome maturation, ATPase activity is. Associates transiently with small ribosomal subunit protein uS11. ATP hydrolysis breaks the interaction with uS11. May temporarily remove uS11 from the ribosome to enable a conformational change of the ribosomal RNA that is needed for the final maturation step of the small ribosomal subunit. This is Putative adenylate kinase from Saccharolobus islandicus (strain M.16.4 / Kamchatka #3) (Sulfolobus islandicus).